Here is a 232-residue protein sequence, read N- to C-terminus: GFP-like non-fluorescent chromoprotein FP595 (232 aa).

The segment at residues 63–65 (MYG) is a cross-link (2-iminomethyl-5-imidazolinone (Met-Gly)). Residue Tyr-64 is modified to (E)-2,3-didehydrotyrosine.

This sequence belongs to the GFP family. Post-translationally, contains a chromophore consisting of modified amino acid residues. The chromophore is formed by autocatalytic backbone condensation between Xaa-N and Gly-(N+2), oxidation of Tyr-(N+1) to didehydrotyrosine, and formation of a double bond to the alpha-amino nitrogen of residue Tyr-(N+1). Maturation of the chromophore requires nothing other than molecular oxygen. Tentacle tips.

Its function is as follows. Pigment protein that is intensely purple in color. This chain is GFP-like non-fluorescent chromoprotein FP595, found in Anemonia sulcata (Mediterranean snakelocks sea anemone).